The primary structure comprises 637 residues: Chaperone protein HtpG (637 aa).

The interval 1-334 (MQDVVNSEKL…SSDLPLNISR (334 aa)) is a; substrate-binding. Residues 335–558 (ETLQNNKVIE…DGSMDIRMER (224 aa)) form a b region. The interval 559–637 (FLREQKQLNY…MNNVLVKVYQ (79 aa)) is c.

It belongs to the heat shock protein 90 family. As to quaternary structure, homodimer.

It is found in the cytoplasm. In terms of biological role, molecular chaperone. Has ATPase activity. This chain is Chaperone protein HtpG, found in Ehrlichia canis (strain Jake).